Here is a 135-residue protein sequence, read N- to C-terminus: Large ribosomal subunit protein uL16 (135 aa).

Belongs to the universal ribosomal protein uL16 family. In terms of assembly, part of the 50S ribosomal subunit.

In terms of biological role, binds 23S rRNA and is also seen to make contacts with the A and possibly P site tRNAs. The chain is Large ribosomal subunit protein uL16 from Coprothermobacter proteolyticus (strain ATCC 35245 / DSM 5265 / OCM 4 / BT).